The primary structure comprises 244 residues: Chlorosome protein I (244 aa).

Residues Met1–Glu95 form the 2Fe-2S ferredoxin-type domain. The [2Fe-2S] cluster site is built by Cys33, Cys39, Cys42, and Cys77.

It depends on [2Fe-2S] cluster as a cofactor.

Its subcellular location is the chlorosome. In terms of biological role, could play a direct role in the oxidation or reduction of the quenching species formed in the chlorosome. This is Chlorosome protein I (csmI) from Chlorobaculum tepidum (strain ATCC 49652 / DSM 12025 / NBRC 103806 / TLS) (Chlorobium tepidum).